The following is a 301-amino-acid chain: GTPase Era (301 aa).

The 169-residue stretch at 7 to 175 folds into the Era-type G domain; it reads YCGFIAIVGR…AAIVRKHLPE (169 aa). Positions 15-22 are G1; sequence GRPNVGKS. 15-22 is a binding site for GTP; sequence GRPNVGKS. The G2 stretch occupies residues 41–45; it reads QTTRH. Residues 62–65 are G3; sequence DTPG. Residues 62 to 66 and 124 to 127 each bind GTP; these read DTPGL and NKVD. Positions 124–127 are G4; sequence NKVD. The tract at residues 154–156 is G5; it reads ISA. The KH type-2 domain occupies 206 to 283; sequence LGAELPYSVT…HLELWVKVKS (78 aa).

It belongs to the TRAFAC class TrmE-Era-EngA-EngB-Septin-like GTPase superfamily. Era GTPase family. In terms of assembly, monomer.

It localises to the cytoplasm. The protein localises to the cell inner membrane. Functionally, an essential GTPase that binds both GDP and GTP, with rapid nucleotide exchange. Plays a role in 16S rRNA processing and 30S ribosomal subunit biogenesis and possibly also in cell cycle regulation and energy metabolism. The protein is GTPase Era of Escherichia fergusonii (strain ATCC 35469 / DSM 13698 / CCUG 18766 / IAM 14443 / JCM 21226 / LMG 7866 / NBRC 102419 / NCTC 12128 / CDC 0568-73).